A 260-amino-acid chain; its full sequence is Snake venom serine protease 2B (260 aa).

Residues 1-18 form the signal peptide; it reads MVLIRVLANLLILQLSYA. A propeptide spanning residues 19–24 is cleaved from the precursor; sequence QKSSEL. One can recognise a Peptidase S1 domain in the interval 25-251; the sequence is VVGGDECNIN…HLDWIQSIIA (227 aa). 6 disulfide bridges follow: cysteine 31/cysteine 165, cysteine 52/cysteine 68, cysteine 102/cysteine 258, cysteine 144/cysteine 212, cysteine 176/cysteine 191, and cysteine 202/cysteine 227. Histidine 67 serves as the catalytic Charge relay system. N-linked (GlcNAc...) asparagine glycans are attached at residues asparagine 101 and asparagine 105. Aspartate 112 (charge relay system) is an active-site residue. Asparagine 123 and asparagine 156 each carry an N-linked (GlcNAc...) asparagine glycan. Serine 206 serves as the catalytic Charge relay system.

The protein belongs to the peptidase S1 family. Snake venom subfamily. In terms of assembly, monomer. As to expression, expressed by the venom gland.

Its subcellular location is the secreted. Its function is as follows. Snake venom serine protease that may act in the hemostasis system of the prey. This chain is Snake venom serine protease 2B (TLG2B), found in Craspedocephalus gramineus (Bamboo pit viper).